Consider the following 152-residue polypeptide: Putative RRN3-like protein RRN3P1 (152 aa).

Belongs to the RRN3 family.

The protein is Putative RRN3-like protein RRN3P1 (RRN3P1) of Homo sapiens (Human).